A 292-amino-acid chain; its full sequence is Elongation factor Ts (292 aa).

Positions 79 to 82 (TDFV) are involved in Mg(2+) ion dislocation from EF-Tu.

The protein belongs to the EF-Ts family.

The protein resides in the cytoplasm. Its function is as follows. Associates with the EF-Tu.GDP complex and induces the exchange of GDP to GTP. It remains bound to the aminoacyl-tRNA.EF-Tu.GTP complex up to the GTP hydrolysis stage on the ribosome. In Malacoplasma penetrans (strain HF-2) (Mycoplasma penetrans), this protein is Elongation factor Ts.